We begin with the raw amino-acid sequence, 451 residues long: MAKHERGLRFQPTGGVKSVQIPAGKKQRLSIERLSDDGRGIAFLEGKTWFVAGSLAGEEVEARVLNARGKVVEARTERVFVASDLRRAPACDYFGRCGGCSVQHVPHEEQLALKQRMLAEQLLRVANVVPDEWAAPLSGAELAYRRRARVAVRWDAKAKRLDVGFRAAASQDIVSIEECPVLVQALQPIMSQLPAMLKSFSKPQVLGHVELFSGSSTAVLLRHTAPLAEADLATLQAFCKTHGAQLWLHGEGEPQPASPGDTLGYRLEPWNLQLAWRPGDFIQVNAAVNTAMIEQALHWLAPAADERVMDLFCGLGNFALPLASLAKDVVAVEGVATMVERAAVNAMSNDLHNVRFFQADLSQPLTHADWAAEGFSAVLLDPPRDGAFEVVRQIRKTGAQRLLYVSCNPATLARDTVELVKQGYRLKRAGILDMFPQTAHVEAMALFEVSK.

Positions 1-21 (MAKHERGLRFQPTGGVKSVQI) are disordered. Positions 20–78 (QIPAGKKQRLSIERLSDDGRGIAFLEGKTWFVAGSLAGEEVEARVLNARGKVVEARTER) constitute a TRAM domain. Residues Cys-91, Cys-97, Cys-100, and Cys-179 each coordinate [4Fe-4S] cluster. S-adenosyl-L-methionine contacts are provided by Gln-283, Phe-312, Asn-317, Glu-333, Asp-360, and Asp-381. Cys-407 functions as the Nucleophile in the catalytic mechanism.

Belongs to the class I-like SAM-binding methyltransferase superfamily. RNA M5U methyltransferase family. RlmD subfamily.

The enzyme catalyses uridine(1939) in 23S rRNA + S-adenosyl-L-methionine = 5-methyluridine(1939) in 23S rRNA + S-adenosyl-L-homocysteine + H(+). Its function is as follows. Catalyzes the formation of 5-methyl-uridine at position 1939 (m5U1939) in 23S rRNA. The protein is 23S rRNA (uracil(1939)-C(5))-methyltransferase RlmD of Pseudomonas syringae pv. tomato (strain ATCC BAA-871 / DC3000).